A 363-amino-acid polypeptide reads, in one-letter code: MKLKLILAVAMLAFSLPSQAERIKDIANVQGVRNNQLIGYGLVVGLPGTGEKTRYTEQTFTTMLKNFGINLPDNFRPKIKNVAVVAVHADMPAFIKPGQELDVTVSSLGEAKSLRGGTLLQTFLKGVDGNVYAIAQGSLVVSGFSADGLDGSKVIQNTPTVGRIPNGAIVERSVATPFSTGDYLTFNLRRSDFSTAQRMADAINDLLGPDMARPLDATSVQVSAPRDVSQRVSFLATLENIEVEPADESAKVIVNSRTGTIVVGQNVKLLPAAVTHGGLTVTIAEATQVSQPNALANGQTTVTSNSTINASESNRRMFMFNPGTTLDELVRAVNLVGAAPSDVLAILEALKVAGALHGELIII.

The signal sequence occupies residues 1 to 20 (MKLKLILAVAMLAFSLPSQA).

Belongs to the FlgI family. In terms of assembly, the basal body constitutes a major portion of the flagellar organelle and consists of four rings (L,P,S, and M) mounted on a central rod.

The protein resides in the periplasm. Its subcellular location is the bacterial flagellum basal body. Assembles around the rod to form the L-ring and probably protects the motor/basal body from shearing forces during rotation. This is Flagellar P-ring protein from Shewanella sp. (strain MR-7).